We begin with the raw amino-acid sequence, 1223 residues long: MAPLRALLSYLLPLHCALCAAAGSRTPELHLSGKLSDYGVTVPCSTDFRGRFLSHVVSGPAAASAGSMVVDTPPTLPRHSSHLRVARSPLHPGGTLWPGRVGRHSLYFNVTVFGKELHLRLRPNRRLVVPGSSVEWQEDFRELFRQPLRQECVYTGGVTGMPGAAVAISNCDGLAGLIRTDSTDFFIEPLERGQQEKEASGRTHVVYRREAVQQEWAEPDGDLHNEAFGLGDLPNLLGLVGDQLGDTERKRRHAKPGSYSIEVLLVVDDSVVRFHGKEHVQNYVLTLMNIVDEIYHDESLGVHINIALVRLIMVGYRQSLSLIERGNPSRSLEQVCRWAHSQQRQDPSHAEHHDHVVFLTRQDFGPSGYAPVTGMCHPLRSCALNHEDGFSSAFVIAHETGHVLGMEHDGQGNGCADETSLGSVMAPLVQAAFHRFHWSRCSKLELSRYLPSYDCLLDDPFDPAWPQPPELPGINYSMDEQCRFDFGSGYQTCLAFRTFEPCKQLWCSHPDNPYFCKTKKGPPLDGTECAPGKWCFKGHCIWKSPEQTYGQDGGWSSWTKFGSCSRSCGGGVRSRSRSCNNPSPAYGGRLCLGPMFEYQVCNSEECPGTYEDFRAQQCAKRNSYYVHQNAKHSWVPYEPDDDAQKCELICQSADTGDVVFMNQVVHDGTRCSYRDPYSVCARGECVPVGCDKEVGSMKADDKCGVCGGDNSHCRTVKGTLGKASKQAGALKLVQIPAGARHIQIEALEKSPHRIVVKNQVTGSFILNPKGKEATSRTFTAMGLEWEDAVEDAKESLKTSGPLPEAIAILALPPTEGGPRSSLAYKYVIHEDLLPLIGSNNVLLEEMDTYEWALKSWAPCSKACGGGIQFTKYGCRRRRDHHMVQRHLCDHKKRPKPIRRRCNQHPCSQPVWVTEEWGACSRSCGKLGVQTRGIQCLLPLSNGTHKVMPAKACAGDRPEARRPCLRVPCPAQWRLGAWSQCSATCGEGIQQRQVVCRTNANSLGHCEGDRPDTVQVCSLPACGGNHQNSTVRADVWELGTPEGQWVPQSEPLHPINKISSTEPCTGDRSVFCQMEVLDRYCSIPGYHRLCCVSCIKKASGPNPGPDPGPTSLPPFSTPGSPLPGPQDPADAAEPPGKPTGSEDHQHGRATQLPGALDTSSPGTQHPFAPETPIPGASWSISPTTPGGLPWGWTQTPTPVPEDKGQPGEDLRHPGTSLPAASPVT.

Positions 1–22 are cleaved as a signal peptide; the sequence is MAPLRALLSYLLPLHCALCAAA. The propeptide occupies 23 to 252; that stretch reads GSRTPELHLS…QLGDTERKRR (230 aa). A glycan (N-linked (GlcNAc...) asparagine) is linked at asparagine 109. Positions 259–460 constitute a Peptidase M12B domain; that stretch reads YSIEVLLVVD…PSYDCLLDDP (202 aa). Disulfide bonds link cysteine 336–cysteine 382, cysteine 376–cysteine 455, and cysteine 415–cysteine 441. Histidine 398 is a binding site for Zn(2+). Glutamate 399 is a catalytic residue. Zn(2+) contacts are provided by histidine 402 and histidine 408. Positions 461–551 constitute a Disintegrin domain; sequence FDPAWPQPPE…WKSPEQTYGQ (91 aa). Asparagine 475 carries an N-linked (GlcNAc...) asparagine glycan. 7 disulfide bridges follow: cysteine 482–cysteine 507, cysteine 493–cysteine 516, cysteine 502–cysteine 535, cysteine 529–cysteine 540, cysteine 564–cysteine 601, cysteine 568–cysteine 606, and cysteine 579–cysteine 591. One can recognise a TSP type-1 1 domain in the interval 552–607; the sequence is DGGWSSWTKFGSCSRSCGGGVRSRSRSCNNPSPAYGGRLCLGPMFEYQVCNSEECP. The tract at residues 730 to 846 is spacer; sequence LKLVQIPAGA…GSNNVLLEEM (117 aa). 3 TSP type-1 domains span residues 847-907, 908-967, and 968-1022; these read DTYE…HPCS, QPVW…LRVP, and CPAQ…PACG. An N-linked (GlcNAc...) asparagine glycan is attached at asparagine 941. Intrachain disulfides connect cysteine 980–cysteine 1016, cysteine 984–cysteine 1021, and cysteine 995–cysteine 1005. Residue asparagine 1027 is glycosylated (N-linked (GlcNAc...) asparagine). Positions 1059-1097 constitute a PLAC domain; the sequence is STEPCTGDRSVFCQMEVLDRYCSIPGYHRLCCVSCIKKA. The segment at 1100-1223 is disordered; the sequence is PNPGPDPGPT…TSLPAASPVT (124 aa). A compositionally biased stretch (pro residues) spans 1101-1125; the sequence is NPGPDPGPTSLPPFSTPGSPLPGPQ. Residues 1199 to 1211 are compositionally biased toward basic and acidic residues; it reads PEDKGQPGEDLRH.

In terms of processing, the precursor is cleaved by a furin endopeptidase. Post-translationally, glycosylated. Can be O-fucosylated by POFUT2 on a serine or a threonine residue found within the consensus sequence C1-X(2)-(S/T)-C2-G of the TSP type-1 repeat domains where C1 and C2 are the first and second cysteine residue of the repeat, respectively. Fucosylated repeats can then be further glycosylated by the addition of a beta-1,3-glucose residue by the glucosyltransferase, B3GALTL. Fucosylation mediates the efficient secretion of ADAMTS family members. Can also be C-glycosylated with one or two mannose molecules on tryptophan residues within the consensus sequence W-X-X-W of the TPRs, and N-glycosylated. These other glycosylations can also facilitate secretion. In terms of tissue distribution, expressed in retina and at low levels in brain, lung and placenta. High expression in fetal tissues.

It localises to the secreted. It is found in the extracellular space. Its subcellular location is the extracellular matrix. Its function is as follows. Has aminoprocollagen type I processing activity in the absence of ADAMTS2. Seems to be synthesized as a latent enzyme that requires activation to display aminoprocollagen peptidase activity. Cleaves lysyl oxidase LOX at a site downstream of its propeptide cleavage site to produce a short LOX form. The chain is A disintegrin and metalloproteinase with thrombospondin motifs 14 (ADAMTS14) from Homo sapiens (Human).